The primary structure comprises 300 residues: Haloalkane dehalogenase 1 (300 aa).

The 130-residue stretch at P47–A176 folds into the AB hydrolase-1 domain. D123 serves as the catalytic Nucleophile. The active-site Proton donor is the D250. H279 (proton acceptor) is an active-site residue.

Belongs to the haloalkane dehalogenase family. Type 1 subfamily. In terms of assembly, monomer.

The enzyme catalyses 1-haloalkane + H2O = a halide anion + a primary alcohol + H(+). Functionally, catalyzes hydrolytic cleavage of carbon-halogen bonds in halogenated aliphatic compounds, leading to the formation of the corresponding primary alcohols, halide ions and protons. In Mycobacterium bovis (strain ATCC BAA-935 / AF2122/97), this protein is Haloalkane dehalogenase 1 (dhmA1).